Here is a 337-residue protein sequence, read N- to C-terminus: Holliday junction branch migration complex subunit RuvB (337 aa).

Residues 1–180 form a large ATPase domain (RuvB-L) region; the sequence is MTRLISADKS…FGVISRLEFY (180 aa). ATP contacts are provided by residues leucine 19, arginine 20, glycine 61, lysine 64, threonine 65, threonine 66, 127–129, arginine 170, tyrosine 180, and arginine 217; that span reads EDF. Threonine 65 is a Mg(2+) binding site. A small ATPAse domain (RuvB-S) region spans residues 181-251; that stretch reads THEELAFIIT…VADQALALLE (71 aa). A head domain (RuvB-H) region spans residues 254–337; it reads DMGFDMMDRA…APEPPQGKLF (84 aa). DNA contacts are provided by arginine 309 and arginine 314.

The protein belongs to the RuvB family. Homohexamer. Forms an RuvA(8)-RuvB(12)-Holliday junction (HJ) complex. HJ DNA is sandwiched between 2 RuvA tetramers; dsDNA enters through RuvA and exits via RuvB. An RuvB hexamer assembles on each DNA strand where it exits the tetramer. Each RuvB hexamer is contacted by two RuvA subunits (via domain III) on 2 adjacent RuvB subunits; this complex drives branch migration. In the full resolvosome a probable DNA-RuvA(4)-RuvB(12)-RuvC(2) complex forms which resolves the HJ.

The protein localises to the cytoplasm. The enzyme catalyses ATP + H2O = ADP + phosphate + H(+). In terms of biological role, the RuvA-RuvB-RuvC complex processes Holliday junction (HJ) DNA during genetic recombination and DNA repair, while the RuvA-RuvB complex plays an important role in the rescue of blocked DNA replication forks via replication fork reversal (RFR). RuvA specifically binds to HJ cruciform DNA, conferring on it an open structure. The RuvB hexamer acts as an ATP-dependent pump, pulling dsDNA into and through the RuvAB complex. RuvB forms 2 homohexamers on either side of HJ DNA bound by 1 or 2 RuvA tetramers; 4 subunits per hexamer contact DNA at a time. Coordinated motions by a converter formed by DNA-disengaged RuvB subunits stimulates ATP hydrolysis and nucleotide exchange. Immobilization of the converter enables RuvB to convert the ATP-contained energy into a lever motion, pulling 2 nucleotides of DNA out of the RuvA tetramer per ATP hydrolyzed, thus driving DNA branch migration. The RuvB motors rotate together with the DNA substrate, which together with the progressing nucleotide cycle form the mechanistic basis for DNA recombination by continuous HJ branch migration. Branch migration allows RuvC to scan DNA until it finds its consensus sequence, where it cleaves and resolves cruciform DNA. The polypeptide is Holliday junction branch migration complex subunit RuvB (Citrifermentans bemidjiense (strain ATCC BAA-1014 / DSM 16622 / JCM 12645 / Bem) (Geobacter bemidjiensis)).